Reading from the N-terminus, the 155-residue chain is RNA pyrophosphohydrolase (155 aa).

The Nudix hydrolase domain maps to 6-148 (GYRANVAIVL…KQEVYRKALT (143 aa)). Residues 38 to 59 (GGVATGETPLQAMYRELHEEIG) carry the Nudix box motif.

The protein belongs to the Nudix hydrolase family. RppH subfamily. A divalent metal cation is required as a cofactor.

Accelerates the degradation of transcripts by removing pyrophosphate from the 5'-end of triphosphorylated RNA, leading to a more labile monophosphorylated state that can stimulate subsequent ribonuclease cleavage. The protein is RNA pyrophosphohydrolase of Francisella tularensis subsp. tularensis (strain FSC 198).